Here is a 120-residue protein sequence, read N- to C-terminus: NAD(P)H-quinone oxidoreductase subunit 3, chloroplastic (120 aa).

3 helical membrane-spanning segments follow: residues 9-29 (IFWA…LISG), 64-84 (MFAL…PWAM), and 88-108 (VLGV…ILGL).

This sequence belongs to the complex I subunit 3 family. NDH is composed of at least 16 different subunits, 5 of which are encoded in the nucleus.

The protein localises to the plastid. It localises to the chloroplast thylakoid membrane. It catalyses the reaction a plastoquinone + NADH + (n+1) H(+)(in) = a plastoquinol + NAD(+) + n H(+)(out). It carries out the reaction a plastoquinone + NADPH + (n+1) H(+)(in) = a plastoquinol + NADP(+) + n H(+)(out). Its function is as follows. NDH shuttles electrons from NAD(P)H:plastoquinone, via FMN and iron-sulfur (Fe-S) centers, to quinones in the photosynthetic chain and possibly in a chloroplast respiratory chain. The immediate electron acceptor for the enzyme in this species is believed to be plastoquinone. Couples the redox reaction to proton translocation, and thus conserves the redox energy in a proton gradient. The chain is NAD(P)H-quinone oxidoreductase subunit 3, chloroplastic from Arabis hirsuta (Hairy rock-cress).